A 1486-amino-acid polypeptide reads, in one-letter code: Chromosome partition protein MukB (1486 aa).

34–41 (GGNGAGKS) is an ATP binding site. Coiled coils occupy residues 326 to 418 (LEAD…QYNQ), 444 to 480 (LETF…QAYQ), and 509 to 603 (RHLA…RAPV). The flexible hinge stretch occupies residues 666-783 (PGGSEDQRLN…EVPLFGRAAR (118 aa)). 3 coiled-coil regions span residues 835-923 (EAEI…AKLE), 977-1115 (EMLS…TAKA), and 1209-1266 (VEAI…QNVS).

It belongs to the SMC family. MukB subfamily. Homodimerization via its hinge domain. Binds to DNA via its C-terminal region. Interacts, and probably forms a ternary complex, with MukE and MukF via its C-terminal region. The complex formation is stimulated by calcium or magnesium. Interacts with tubulin-related protein FtsZ.

It is found in the cytoplasm. It localises to the nucleoid. Plays a central role in chromosome condensation, segregation and cell cycle progression. Functions as a homodimer, which is essential for chromosome partition. Involved in negative DNA supercoiling in vivo, and by this means organize and compact chromosomes. May achieve or facilitate chromosome segregation by condensation DNA from both sides of a centrally located replisome during cell division. The polypeptide is Chromosome partition protein MukB (Shigella boydii serotype 4 (strain Sb227)).